The sequence spans 98 residues: Ig heavy chain V region 6.96 (98 aa).

The region spanning 1–98 (EVQLVESGGG…EDTAMYYCAR (98 aa)) is the Ig-like domain.

This is Ig heavy chain V region 6.96 from Mus musculus (Mouse).